Here is a 241-residue protein sequence, read N- to C-terminus: 6-phosphogluconolactonase (241 aa).

The protein belongs to the glucosamine/galactosamine-6-phosphate isomerase family. 6-phosphogluconolactonase subfamily.

It catalyses the reaction 6-phospho-D-glucono-1,5-lactone + H2O = 6-phospho-D-gluconate + H(+). The protein operates within carbohydrate degradation; pentose phosphate pathway; D-ribulose 5-phosphate from D-glucose 6-phosphate (oxidative stage): step 2/3. Functionally, hydrolysis of 6-phosphogluconolactone to 6-phosphogluconate. The polypeptide is 6-phosphogluconolactonase (pgl) (Treponema pallidum (strain Nichols)).